Consider the following 248-residue polypeptide: MSEAAQTLDGWYCLHDFRTIDWSAWKTLPNEEREAAISEFLALVDQWETTESEKQGSHAVYTIVGQKADILFMILRPTLDELHEIETALNKTKLADYLLPAYSYVSVVELSNYLASGSEDPYQIPEVRRRLYPILPKTNYICFYPMDKRRQGNDNWYMLSMEQRRELMRAHGMTGRKYAGKVTQIITGSVGLDDFEWGVTLFSDDALQFKKLVYEMRFDEVSARFGEFGSFFVGTRLPMENVSSFFHV.

Fe-coproporphyrin III is bound by residues Arg130, Tyr144, 144–148 (YPMDK), Lys148, His171, Gln184, and Ser222. Tyr144 is an active-site residue.

It belongs to the ChdC family. Type 1 subfamily. Homopentamer. It depends on Fe-coproporphyrin III as a cofactor.

The enzyme catalyses Fe-coproporphyrin III + 2 H2O2 + 2 H(+) = heme b + 2 CO2 + 4 H2O. The catalysed reaction is Fe-coproporphyrin III + H2O2 + H(+) = harderoheme III + CO2 + 2 H2O. It catalyses the reaction harderoheme III + H2O2 + H(+) = heme b + CO2 + 2 H2O. The protein operates within porphyrin-containing compound metabolism; protoheme biosynthesis. Involved in coproporphyrin-dependent heme b biosynthesis. Catalyzes the decarboxylation of Fe-coproporphyrin III (coproheme) to heme b (protoheme IX), the last step of the pathway. The reaction occurs in a stepwise manner with a three-propionate harderoheme intermediate. This chain is Coproheme decarboxylase, found in Geobacillus stearothermophilus (strain DSM 13240 / CIP 106956 / 10).